Consider the following 393-residue polypeptide: S-adenosylmethionine synthase (393 aa).

His-16 is an ATP binding site. Asp-18 is a binding site for Mg(2+). Position 44 (Glu-44) interacts with K(+). Residues Glu-57 and Gln-100 each contribute to the L-methionine site. Residues 100-110 (QSNDIAQGVDH) form a flexible loop region. Residues 167–169 (DAK), 238–239 (RF), Asp-247, 253–254 (RK), Ala-270, and Lys-274 each bind ATP. Asp-247 is a binding site for L-methionine. Lys-278 contributes to the L-methionine binding site.

The protein belongs to the AdoMet synthase family. As to quaternary structure, homotetramer; dimer of dimers. It depends on Mg(2+) as a cofactor. The cofactor is K(+).

The protein localises to the cytoplasm. It catalyses the reaction L-methionine + ATP + H2O = S-adenosyl-L-methionine + phosphate + diphosphate. It functions in the pathway amino-acid biosynthesis; S-adenosyl-L-methionine biosynthesis; S-adenosyl-L-methionine from L-methionine: step 1/1. Catalyzes the formation of S-adenosylmethionine (AdoMet) from methionine and ATP. The overall synthetic reaction is composed of two sequential steps, AdoMet formation and the subsequent tripolyphosphate hydrolysis which occurs prior to release of AdoMet from the enzyme. In Albidiferax ferrireducens (strain ATCC BAA-621 / DSM 15236 / T118) (Rhodoferax ferrireducens), this protein is S-adenosylmethionine synthase.